Reading from the N-terminus, the 156-residue chain is MSKVPSLIEELAKPIVDELNLELVDIEFVKEGRNWFLRVYVDTPEGGIDIDQCAQVSERLSLLLDEKDPITQNYYLEVSSPGAERPLKKDADFEKAIGKFIYVKTYKPIKDMKEFQGYLTSYEEHTLVMEVRIKTRKITVTIEQEKIALARLAIDF.

Belongs to the RimP family.

Its subcellular location is the cytoplasm. Functionally, required for maturation of 30S ribosomal subunits. The protein is Ribosome maturation factor RimP of Lysinibacillus sphaericus (strain C3-41).